The sequence spans 234 residues: Large ribosomal subunit protein uL1c (234 aa).

It belongs to the universal ribosomal protein uL1 family. In terms of assembly, part of the 50S ribosomal subunit.

It localises to the plastid. It is found in the chloroplast. Its function is as follows. Binds directly to 23S rRNA. Might be involved in E site tRNA release (Potential). The protein is Large ribosomal subunit protein uL1c (rpl1) of Guillardia theta (Cryptophyte).